The sequence spans 191 residues: Probable ribosome biogenesis protein RLP24 (191 aa).

Position 136 is a phosphoserine (Ser136).

Belongs to the eukaryotic ribosomal protein eL24 family. Associated with nucleolar and cytoplasmic pre-60S particles. At the end of biogenesis it dissociates from cytoplasmic pre-60S particles and is likely to be exchanged for its ribosomal homologue, RPL24.

It localises to the nucleus. The protein localises to the nucleolus. In terms of biological role, involved in the biogenesis of the 60S ribosomal subunit. Ensures the docking of NOG1 to pre-60S particles. This Drosophila melanogaster (Fruit fly) protein is Probable ribosome biogenesis protein RLP24 (RpL24-like).